Consider the following 399-residue polypeptide: Nicotinate phosphoribosyltransferase (399 aa).

At histidine 224 the chain carries Phosphohistidine; by autocatalysis.

The protein belongs to the NAPRTase family. Transiently phosphorylated on a His residue during the reaction cycle. Phosphorylation strongly increases the affinity for substrates and increases the rate of nicotinate D-ribonucleotide production. Dephosphorylation regenerates the low-affinity form of the enzyme, leading to product release.

It carries out the reaction nicotinate + 5-phospho-alpha-D-ribose 1-diphosphate + ATP + H2O = nicotinate beta-D-ribonucleotide + ADP + phosphate + diphosphate. The protein operates within cofactor biosynthesis; NAD(+) biosynthesis; nicotinate D-ribonucleotide from nicotinate: step 1/1. Functionally, catalyzes the synthesis of beta-nicotinate D-ribonucleotide from nicotinate and 5-phospho-D-ribose 1-phosphate at the expense of ATP. The polypeptide is Nicotinate phosphoribosyltransferase (Ectopseudomonas mendocina (strain ymp) (Pseudomonas mendocina)).